The following is a 186-amino-acid chain: Elongation factor P (186 aa).

It belongs to the elongation factor P family.

Its subcellular location is the cytoplasm. It functions in the pathway protein biosynthesis; polypeptide chain elongation. In terms of biological role, involved in peptide bond synthesis. Stimulates efficient translation and peptide-bond synthesis on native or reconstituted 70S ribosomes in vitro. Probably functions indirectly by altering the affinity of the ribosome for aminoacyl-tRNA, thus increasing their reactivity as acceptors for peptidyl transferase. This is Elongation factor P from Acidobacterium capsulatum (strain ATCC 51196 / DSM 11244 / BCRC 80197 / JCM 7670 / NBRC 15755 / NCIMB 13165 / 161).